Reading from the N-terminus, the 145-residue chain is Putative nickel-responsive regulator (145 aa).

Residues His77, His88, His90, and Cys96 each contribute to the Ni(2+) site.

This sequence belongs to the transcriptional regulatory CopG/NikR family. Ni(2+) is required as a cofactor.

Its function is as follows. Transcriptional regulator. This chain is Putative nickel-responsive regulator, found in Rhizobium rhizogenes (strain K84 / ATCC BAA-868) (Agrobacterium radiobacter).